The primary structure comprises 290 residues: Pyridoxal 5'-phosphate synthase subunit PdxS (290 aa).

D-ribose 5-phosphate is bound at residue D22. The active-site Schiff-base intermediate with D-ribose 5-phosphate is K79. G151 contacts D-ribose 5-phosphate. R163 lines the D-glyceraldehyde 3-phosphate pocket. Residues G212 and 233-234 (GS) each bind D-ribose 5-phosphate.

It belongs to the PdxS/SNZ family. In the presence of PdxT, forms a dodecamer of heterodimers.

It carries out the reaction aldehydo-D-ribose 5-phosphate + D-glyceraldehyde 3-phosphate + L-glutamine = pyridoxal 5'-phosphate + L-glutamate + phosphate + 3 H2O + H(+). It participates in cofactor biosynthesis; pyridoxal 5'-phosphate biosynthesis. Functionally, catalyzes the formation of pyridoxal 5'-phosphate from ribose 5-phosphate (RBP), glyceraldehyde 3-phosphate (G3P) and ammonia. The ammonia is provided by the PdxT subunit. Can also use ribulose 5-phosphate and dihydroxyacetone phosphate as substrates, resulting from enzyme-catalyzed isomerization of RBP and G3P, respectively. The sequence is that of Pyridoxal 5'-phosphate synthase subunit PdxS from Clostridium botulinum (strain Langeland / NCTC 10281 / Type F).